We begin with the raw amino-acid sequence, 124 residues long: MPTINQLVRRPRRPRESANKAPALQHNPQKRAVCVKVYTTTPKKPNSALRKVARVRIAGYGSEVIAYIPGEGHNLQEHSVVLIRGGRVKDLPGVRYHIVRGALDAKGVQGRKKARSKYGVKRGV.

Residues 1 to 29 (MPTINQLVRRPRRPRESANKAPALQHNPQ) form a disordered region. Residue Asp90 is modified to 3-methylthioaspartic acid.

The protein belongs to the universal ribosomal protein uS12 family. Part of the 30S ribosomal subunit. Contacts proteins S8 and S17. May interact with IF1 in the 30S initiation complex.

Its function is as follows. With S4 and S5 plays an important role in translational accuracy. In terms of biological role, interacts with and stabilizes bases of the 16S rRNA that are involved in tRNA selection in the A site and with the mRNA backbone. Located at the interface of the 30S and 50S subunits, it traverses the body of the 30S subunit contacting proteins on the other side and probably holding the rRNA structure together. The combined cluster of proteins S8, S12 and S17 appears to hold together the shoulder and platform of the 30S subunit. This Anaplasma marginale (strain Florida) protein is Small ribosomal subunit protein uS12.